Reading from the N-terminus, the 128-residue chain is Sulfurtransferase TusD (128 aa).

Residue cysteine 78 is the Cysteine persulfide intermediate of the active site.

The protein belongs to the DsrE/TusD family. As to quaternary structure, heterohexamer, formed by a dimer of trimers. The hexameric TusBCD complex contains 2 copies each of TusB, TusC and TusD. The TusBCD complex interacts with TusE.

Its subcellular location is the cytoplasm. Its function is as follows. Part of a sulfur-relay system required for 2-thiolation of 5-methylaminomethyl-2-thiouridine (mnm(5)s(2)U) at tRNA wobble positions. Accepts sulfur from TusA and transfers it in turn to TusE. The polypeptide is Sulfurtransferase TusD (Salmonella arizonae (strain ATCC BAA-731 / CDC346-86 / RSK2980)).